The chain runs to 245 residues: 8-amino-3,8-dideoxy-manno-octulosonate cytidylyltransferase (245 aa).

Belongs to the KdsB family.

Its subcellular location is the cytoplasm. It carries out the reaction 8-amino-3,8-dideoxy-alpha-D-manno-octulosonate + CTP = CMP-8-amino-3,8-dideoxy-alpha-D-manno-oct-2-ulosonate + diphosphate. The protein operates within bacterial outer membrane biogenesis; lipopolysaccharide biosynthesis. In terms of biological role, activates KDO8N (a required 8-carbon sugar) for incorporation into bacterial lipopolysaccharide in the Shewanella genus. This Shewanella oneidensis (strain ATCC 700550 / JCM 31522 / CIP 106686 / LMG 19005 / NCIMB 14063 / MR-1) protein is 8-amino-3,8-dideoxy-manno-octulosonate cytidylyltransferase.